Consider the following 147-residue polypeptide: Large ribosomal subunit protein uL13 (147 aa).

It belongs to the universal ribosomal protein uL13 family. In terms of assembly, part of the 50S ribosomal subunit.

Functionally, this protein is one of the early assembly proteins of the 50S ribosomal subunit, although it is not seen to bind rRNA by itself. It is important during the early stages of 50S assembly. The chain is Large ribosomal subunit protein uL13 from Limosilactobacillus fermentum (strain NBRC 3956 / LMG 18251) (Lactobacillus fermentum).